A 202-amino-acid chain; its full sequence is Small ribosomal subunit protein uS4c (202 aa).

Residues 18–45 (LPGLTRKMAKRKSPPGQHGAASKKPSQY) are disordered. The region spanning 90–152 (MRLDTTIFRL…SRSRKLIEGY (63 aa)) is the S4 RNA-binding domain.

The protein belongs to the universal ribosomal protein uS4 family. As to quaternary structure, part of the 30S ribosomal subunit. Contacts protein S5. The interaction surface between S4 and S5 is involved in control of translational fidelity.

The protein resides in the plastid. The protein localises to the chloroplast. In terms of biological role, one of the primary rRNA binding proteins, it binds directly to 16S rRNA where it nucleates assembly of the body of the 30S subunit. Functionally, with S5 and S12 plays an important role in translational accuracy. In Nephroselmis olivacea (Green alga), this protein is Small ribosomal subunit protein uS4c (rps4).